The chain runs to 214 residues: uncharacterized protein (214 aa).

Positions 39-68 (KLRSKKEVEEKIKEVDRELEEVVNAGVSIN) form a coiled coil. Positions 99–114 (EIKVEAPEPDEEKLPD) are enriched in basic and acidic residues. Residues 99–162 (EIKVEAPEPD…EEVEFDEEDD (64 aa)) form a disordered region. Positions 123-162 (SDLDMDFEDLGQEIPLDADEQEEEEEEEEVEEVEFDEEDD) are enriched in acidic residues. Positions 138-212 (LDADEQEEEE…IQRLKVLSGG (75 aa)) form a coiled coil.

This is an uncharacterized protein from Archaeoglobus fulgidus (strain ATCC 49558 / DSM 4304 / JCM 9628 / NBRC 100126 / VC-16).